We begin with the raw amino-acid sequence, 826 residues long: Arf-GAP with ANK repeat and PH domain-containing protein cnt-1 (826 aa).

The PH domain maps to 275 to 373; sequence DVMMEGYLYK…WMRALQRTIL (99 aa). The Arf-GAP domain maps to 447-572; that stretch reads TTAFEQVRRV…RFAVAEDTRA (126 aa). The C4-type zinc finger occupies 462–485; the sequence is CADCGSPAPKWVSINLGVVLCIEC. A disordered region spans residues 570 to 604; sequence TRARSSATNRQEHLKHKTSIGGNSSSNGVNRSSSY. Low complexity predominate over residues 588 to 603; the sequence is SIGGNSSSNGVNRSSS. ANK repeat units lie at residues 690-719, 723-752, and 756-789; these read NGTT…KINM, KLNT…DSNL, and DSKT…NADF.

As to quaternary structure, interacts (via C-terminal ankyrin repeat) with rab-10 (GTP-bound form); the interaction is required for cnt-1 recruitment to endosomes. Interacts (via C-terminal ankyrin repeat) with rab-8 (GTP-bound form) and rab-35 (GTP-bound form). Post-translationally, cleaved by caspase ced-3 after Asp-382 and Asp-609. Cleavage at Asp-382 is required for subsequent cleavage at Asp-609.

The protein resides in the cytoplasm. It is found in the recycling endosome membrane. Its subcellular location is the basolateral cell membrane. The protein localises to the apical cell membrane. It localises to the cell membrane. In terms of biological role, GTPase-activating protein for the ADP ribosylation factor family. Regulates endosome recycling downstream of rab-10 and upstream of arf-6. Promotes apoptosis during embryonic development. Produced by caspase ced-3-mediated cleavage, and translocates to the plasma membrane where it prevents the activation of the prosurvival Akt-1/2 and sgk-1 signaling pathway by competing with Akt-1/2 for the binding to PtdIns(3,4,5)P3. This is Arf-GAP with ANK repeat and PH domain-containing protein cnt-1 from Caenorhabditis elegans.